We begin with the raw amino-acid sequence, 256 residues long: Phosphoribosylaminoimidazole-succinocarboxamide synthase (256 aa).

The protein belongs to the SAICAR synthetase family.

It carries out the reaction 5-amino-1-(5-phospho-D-ribosyl)imidazole-4-carboxylate + L-aspartate + ATP = (2S)-2-[5-amino-1-(5-phospho-beta-D-ribosyl)imidazole-4-carboxamido]succinate + ADP + phosphate + 2 H(+). It functions in the pathway purine metabolism; IMP biosynthesis via de novo pathway; 5-amino-1-(5-phospho-D-ribosyl)imidazole-4-carboxamide from 5-amino-1-(5-phospho-D-ribosyl)imidazole-4-carboxylate: step 1/2. The sequence is that of Phosphoribosylaminoimidazole-succinocarboxamide synthase from Synechococcus sp. (strain JA-3-3Ab) (Cyanobacteria bacterium Yellowstone A-Prime).